The sequence spans 513 residues: Glycogen synthase (513 aa).

Residue K47 participates in ADP-alpha-D-glucose binding.

This sequence belongs to the glycosyltransferase 1 family. Bacterial/plant glycogen synthase subfamily.

The enzyme catalyses [(1-&gt;4)-alpha-D-glucosyl](n) + ADP-alpha-D-glucose = [(1-&gt;4)-alpha-D-glucosyl](n+1) + ADP + H(+). It functions in the pathway glycan biosynthesis; glycogen biosynthesis. Its function is as follows. Synthesizes alpha-1,4-glucan chains using ADP-glucose. The protein is Glycogen synthase of Pseudomonas aeruginosa (strain ATCC 15692 / DSM 22644 / CIP 104116 / JCM 14847 / LMG 12228 / 1C / PRS 101 / PAO1).